Here is a 125-residue protein sequence, read N- to C-terminus: Morphine 6-dehydrogenase (125 aa).

NADP(+) contacts are provided by residues 9–18 (GHSIPVLGFI) and 74–111 (SALG…IERE).

This sequence belongs to the aldo/keto reductase family. In terms of assembly, monomer. The N-terminus is blocked.

It localises to the cytoplasm. The catalysed reaction is morphine + NAD(+) = morphinone + NADH + H(+). It catalyses the reaction morphine + NADP(+) = morphinone + NADPH + H(+). With respect to regulation, strongly inhibited by sulfhydryl reagents and quercetin, but not by pyrazole, barbital and indomethacine. Catalyzes the dehydrogenation of morphine to morphinone. Uses both NAD and NADP, but the activity is much greater with NAD than with NADP. This Oryctolagus cuniculus (Rabbit) protein is Morphine 6-dehydrogenase.